We begin with the raw amino-acid sequence, 319 residues long: UDP-3-O-acylglucosamine N-acyltransferase (319 aa).

The active-site Proton acceptor is the His-230.

It belongs to the transferase hexapeptide repeat family. LpxD subfamily. Homotrimer.

It carries out the reaction a UDP-3-O-[(3R)-3-hydroxyacyl]-alpha-D-glucosamine + a (3R)-hydroxyacyl-[ACP] = a UDP-2-N,3-O-bis[(3R)-3-hydroxyacyl]-alpha-D-glucosamine + holo-[ACP] + H(+). It participates in bacterial outer membrane biogenesis; LPS lipid A biosynthesis. Functionally, catalyzes the N-acylation of UDP-3-O-acylglucosamine using 3-hydroxyacyl-ACP as the acyl donor. Is involved in the biosynthesis of lipid A, a phosphorylated glycolipid that anchors the lipopolysaccharide to the outer membrane of the cell. The polypeptide is UDP-3-O-acylglucosamine N-acyltransferase (Campylobacter lari (strain RM2100 / D67 / ATCC BAA-1060)).